The sequence spans 1145 residues: Adenylate cyclase type 3 (1145 aa).

Topologically, residues 1-79 (MPRNQGFSDP…FKRQRHETLL (79 aa)) are cytoplasmic. The next 5 membrane-spanning stretches (helical) occupy residues 80–100 (VLVV…AVVF), 105–125 (LAPL…FVLC), 139–159 (VPYL…GLNF), 173–193 (AFFV…IVII), and 226–246 (ILAN…SYYM). Mg(2+) is bound by residues aspartate 324, isoleucine 325, and aspartate 368. Residues 324–329 (DIVGFT) and 366–368 (LGD) contribute to the ATP site. The chain crosses the membrane as a helical span at residues 381–401 (EDHAVCSILMGLAMVEAISYV). Residues 402-631 (REKTKTGVDM…RYSVEKEKQS (230 aa)) lie on the Cytoplasmic side of the membrane. Arginine 412 contacts ATP. Lysine 465 is covalently cross-linked (Glycyl lysine isopeptide (Lys-Gly) (interchain with G-Cter in SUMO3)). Positions 504-564 (QNGLNGSAVP…DNPSFPNPRR (61 aa)) are disordered. 2 stretches are compositionally biased toward low complexity: residues 516-526 (APASSKPSSPA) and 535-544 (GSAHASGSTS). A Phosphoserine modification is found at serine 524. Residue serine 579 is modified to Phosphoserine. Transmembrane regions (helical) follow at residues 632-652 (GAAF…EILI), 663-683 (FVVG…AIFP), and 707-727 (WAML…LSCL). A glycan (N-linked (GlcNAc...) asparagine) is linked at asparagine 735. 3 helical membrane-spanning segments follow: residues 753 to 773 (YNYV…VSHM), 774 to 794 (VKLT…LYAW), and 834 to 854 (LPLV…MLSF). Topologically, residues 855 to 1145 (YYFSRHVEKL…TLPHQVVDNP (291 aa)) are cytoplasmic. ATP contacts are provided by residues lysine 976, 1063-1065 (DIW), and 1070-1074 (NVASR). Residue serine 1077 is modified to Phosphoserine; by CaMK2. An ATP-binding site is contributed by lysine 1110.

The protein belongs to the adenylyl cyclase class-4/guanylyl cyclase family. Mg(2+) serves as cofactor. Mn(2+) is required as a cofactor. Post-translationally, N-glycosylated. Rapidly phosphorylated after stimulation by odorants or forskolin. Phosphorylation by CaMK2 at Ser-1077 down-regulates enzyme activity. In terms of processing, sumoylated. Sumoylation is required for targeting of olfactory cilia. As to expression, detected in the acrosomal region of epididymal spermatozoa, the acrosomal region of round spermatids and in elongating spermatids. Detected in cilia in the olfactory epithelium (at protein level). Detected in olfactory epithelium neurons. Detected in brain, testis, late pachytene spermatocytes, round spermatids and elongating spermatids.

Its subcellular location is the cell membrane. It is found in the cell projection. The protein localises to the cilium. The protein resides in the golgi apparatus. It localises to the cytoplasm. It catalyses the reaction ATP = 3',5'-cyclic AMP + diphosphate. With respect to regulation, specifically activated by the G alpha protein GNAL/G(olf) in signaling cascades triggered by odorant receptors. Activated by forskolin. After forskolin treatment, activity is further increased by calcium/calmodulin. In the absence of forskolin, calcium/calmodulin has little effect on enzyme activity. In terms of biological role, catalyzes the formation of the signaling molecule cAMP in response to G-protein signaling. Participates in signaling cascades triggered by odorant receptors via its function in cAMP biosynthesis: specifically activated by G alpha protein GNAL/G(olf) in olfactory epithelium. Required for the perception of odorants. Required for normal sperm motility and normal male fertility. Plays a role in regulating insulin levels and body fat accumulation in response to a high fat diet. This is Adenylate cyclase type 3 (Adcy3) from Mus musculus (Mouse).